A 211-amino-acid polypeptide reads, in one-letter code: Endonuclease V (211 aa).

Residues Asp-37 and Asp-102 each contribute to the Mg(2+) site.

It belongs to the endonuclease V family. The cofactor is Mg(2+).

It localises to the cytoplasm. The enzyme catalyses Endonucleolytic cleavage at apurinic or apyrimidinic sites to products with a 5'-phosphate.. Its function is as follows. DNA repair enzyme involved in the repair of deaminated bases. Selectively cleaves double-stranded DNA at the second phosphodiester bond 3' to a deoxyinosine leaving behind the intact lesion on the nicked DNA. The polypeptide is Endonuclease V (Ignicoccus hospitalis (strain KIN4/I / DSM 18386 / JCM 14125)).